The chain runs to 153 residues: MSENKQALQVAALKNGTVIDHIPSEKLFTVVQLLGVEQMKCNITIGFNLDSKKLGKKGIIKIADKFFCDEEINRISVVAPYVKLNIIRDYEVVEKKEVRMPDELHGIVKCANPKCITNNEPMPTLFHVIDKDNCIVKCHYCEKEQKREEITIL.

4 residues coordinate Zn(2+): cysteine 110, cysteine 115, cysteine 138, and cysteine 141.

It belongs to the PyrI family. As to quaternary structure, contains catalytic and regulatory chains. It depends on Zn(2+) as a cofactor.

Its function is as follows. Involved in allosteric regulation of aspartate carbamoyltransferase. In Bacteroides thetaiotaomicron (strain ATCC 29148 / DSM 2079 / JCM 5827 / CCUG 10774 / NCTC 10582 / VPI-5482 / E50), this protein is Aspartate carbamoyltransferase regulatory chain.